We begin with the raw amino-acid sequence, 162 residues long: Protein mmf1, mitochondrial (162 aa).

This sequence belongs to the RutC family.

It is found in the mitochondrion. It localises to the cytoplasm. Functionally, plays a role in the maintenance of mitochondrial DNA. This is Protein mmf1, mitochondrial (mmf1) from Schizosaccharomyces pombe (strain 972 / ATCC 24843) (Fission yeast).